The primary structure comprises 316 residues: Beta-ketoacyl-[acyl-carrier-protein] synthase III 4 (316 aa).

Residues Cys-114 and His-242 contribute to the active site. The interval 243–247 (QANLR) is ACP-binding. Residue Asn-272 is part of the active site.

Belongs to the thiolase-like superfamily. FabH family. As to quaternary structure, homodimer.

It localises to the cytoplasm. It catalyses the reaction malonyl-[ACP] + acetyl-CoA + H(+) = 3-oxobutanoyl-[ACP] + CO2 + CoA. The protein operates within lipid metabolism; fatty acid biosynthesis. Catalyzes the condensation reaction of fatty acid synthesis by the addition to an acyl acceptor of two carbons from malonyl-ACP. Catalyzes the first condensation reaction which initiates fatty acid synthesis and may therefore play a role in governing the total rate of fatty acid production. Possesses both acetoacetyl-ACP synthase and acetyl transacylase activities. Its substrate specificity determines the biosynthesis of branched-chain and/or straight-chain of fatty acids. The chain is Beta-ketoacyl-[acyl-carrier-protein] synthase III 4 from Streptomyces coelicolor (strain ATCC BAA-471 / A3(2) / M145).